We begin with the raw amino-acid sequence, 201 residues long: Holliday junction branch migration complex subunit RuvA (201 aa).

A domain I region spans residues 1–64 (MIGFIRGLLV…EDAHSLFGFG (64 aa)). A domain II region spans residues 65–143 (TEAERGLFRS…IGVPSLAPAS (79 aa)). Residues 144–153 (FAGGAAPLPA) form a flexible linker region. Residues 153–201 (AADPADEAVSALIALGFKPQEANTLVARQAAEGRSAEDLIRAALQSAVR) are domain III.

Belongs to the RuvA family. As to quaternary structure, homotetramer. Forms an RuvA(8)-RuvB(12)-Holliday junction (HJ) complex. HJ DNA is sandwiched between 2 RuvA tetramers; dsDNA enters through RuvA and exits via RuvB. An RuvB hexamer assembles on each DNA strand where it exits the tetramer. Each RuvB hexamer is contacted by two RuvA subunits (via domain III) on 2 adjacent RuvB subunits; this complex drives branch migration. In the full resolvosome a probable DNA-RuvA(4)-RuvB(12)-RuvC(2) complex forms which resolves the HJ.

It localises to the cytoplasm. Its function is as follows. The RuvA-RuvB-RuvC complex processes Holliday junction (HJ) DNA during genetic recombination and DNA repair, while the RuvA-RuvB complex plays an important role in the rescue of blocked DNA replication forks via replication fork reversal (RFR). RuvA specifically binds to HJ cruciform DNA, conferring on it an open structure. The RuvB hexamer acts as an ATP-dependent pump, pulling dsDNA into and through the RuvAB complex. HJ branch migration allows RuvC to scan DNA until it finds its consensus sequence, where it cleaves and resolves the cruciform DNA. This Methylococcus capsulatus (strain ATCC 33009 / NCIMB 11132 / Bath) protein is Holliday junction branch migration complex subunit RuvA.